A 155-amino-acid chain; its full sequence is Endoribonuclease YbeY (155 aa).

Residues His-114, His-118, and His-124 each contribute to the Zn(2+) site.

It belongs to the endoribonuclease YbeY family. Zn(2+) is required as a cofactor.

It localises to the cytoplasm. In terms of biological role, single strand-specific metallo-endoribonuclease involved in late-stage 70S ribosome quality control and in maturation of the 3' terminus of the 16S rRNA. The sequence is that of Endoribonuclease YbeY from Escherichia coli O17:K52:H18 (strain UMN026 / ExPEC).